The primary structure comprises 120 residues: Protein VraC (120 aa).

The sequence is that of Protein VraC from Staphylococcus epidermidis (strain ATCC 35984 / DSM 28319 / BCRC 17069 / CCUG 31568 / BM 3577 / RP62A).